Here is a 178-residue protein sequence, read N- to C-terminus: Adenine phosphoribosyltransferase (178 aa).

The protein belongs to the purine/pyrimidine phosphoribosyltransferase family. Homodimer.

It is found in the cytoplasm. The catalysed reaction is AMP + diphosphate = 5-phospho-alpha-D-ribose 1-diphosphate + adenine. It functions in the pathway purine metabolism; AMP biosynthesis via salvage pathway; AMP from adenine: step 1/1. Catalyzes a salvage reaction resulting in the formation of AMP, that is energically less costly than de novo synthesis. This is Adenine phosphoribosyltransferase from Cereibacter sphaeroides (strain KD131 / KCTC 12085) (Rhodobacter sphaeroides).